We begin with the raw amino-acid sequence, 394 residues long: MDALVEDDICILNHEKAHKRDTVTPVSIYSGDESVASHFALVTAYEDIKKRLKDSEKENSLLKKRIRFLEEKLIARFDEETSSVGREQVNKAYHAYREVCIDRDNLKSKLDKMNKDNSESLKVLNEQLQSKEVELLQLRTEVETQQVMRNLNTPSSNWEVEKLSCDLKIHGLEQELELMRKECSDLKIELRKAKQTDPYQEDNLKSRDLQKLSISSDNMQHAYWELKREMSNLHLVTQVQAELLRKLKTSTAIKKACAPVGCSEDLGRDSTKLHLMNFTATYTRHPPLSPNGKALCHAASSPLPGDIKVLSEKAVLQSWTDNERSIPNDGTCFQEHSSYGRNSLSLEDNSWVFPSPPKSSETAFGETKSKTLPLPNLPPLHYLDQHNQNCLYKN.

Residues 1-197 (MDALVEDDIC…IELRKAKQTD (197 aa)) form a homodimerization region. 2 coiled-coil regions span residues 40–76 (ALVTAYEDIKKRLKDSEKENSLLKKRIRFLEEKLIAR) and 102–196 (DRDN…AKQT). The interaction with TBK1 and IKBKE stretch occupies residues 216-257 (SDNMQHAYWELKREMSNLHLVTQVQAELLRKLKTSTAIKKAC). A phosphoserine mark is found at S318 and S355. The segment at 355 to 379 (SPPKSSETAFGETKSKTLPLPNLPP) is disordered.

In terms of assembly, homodimer. Interacts with IKBKE, TBK1 and TICAM1. Interacts with TAX1BP1. Interacts with CALCOCO2. In terms of processing, ubiquitinated via 'Lys-48'-linked polyubiquitination by TRIM38, leading to its degradation.

Its subcellular location is the cytoplasm. Adapter protein which binds TBK1 and IKBKE playing a role in antiviral innate immunity. Activates serine/threonine-protein kinase TBK1 and facilitates its oligomerization. Enhances the phosphorylation of NF-kappa-B p65 subunit RELA by TBK1. Promotes TBK1-induced as well as TNF-alpha or PMA-induced activation of NF-kappa-B. Participates in IFNB promoter activation via TICAM1. The protein is 5-azacytidine-induced protein 2 (AZI2) of Macaca fascicularis (Crab-eating macaque).